We begin with the raw amino-acid sequence, 367 residues long: Cobalt-precorrin-5B C(1)-methyltransferase (367 aa).

This sequence belongs to the CbiD family.

The catalysed reaction is Co-precorrin-5B + S-adenosyl-L-methionine = Co-precorrin-6A + S-adenosyl-L-homocysteine. It functions in the pathway cofactor biosynthesis; adenosylcobalamin biosynthesis; cob(II)yrinate a,c-diamide from sirohydrochlorin (anaerobic route): step 6/10. Catalyzes the methylation of C-1 in cobalt-precorrin-5B to form cobalt-precorrin-6A. This chain is Cobalt-precorrin-5B C(1)-methyltransferase, found in Thermosynechococcus vestitus (strain NIES-2133 / IAM M-273 / BP-1).